The following is a 438-amino-acid chain: GTPase Der (438 aa).

2 EngA-type G domains span residues 3 to 168 (PLIA…PCPE) and 179 to 354 (IKLA…INRR). GTP-binding positions include 9 to 16 (GRPNVGKS), 56 to 60 (DTGGY), 120 to 123 (NKVD), 185 to 192 (GRPNVGKS), 232 to 236 (DTAGL), and 297 to 300 (NKWD). The region spanning 355-438 (QKISTSNLNR…LPITMRFLRK (84 aa)) is the KH-like domain.

It belongs to the TRAFAC class TrmE-Era-EngA-EngB-Septin-like GTPase superfamily. EngA (Der) GTPase family. Associates with the 50S ribosomal subunit.

Its function is as follows. GTPase that plays an essential role in the late steps of ribosome biogenesis. The polypeptide is GTPase Der (Chlorobaculum parvum (strain DSM 263 / NCIMB 8327) (Chlorobium vibrioforme subsp. thiosulfatophilum)).